The sequence spans 465 residues: MISAIRPAVRSSVRVAPMANTAFRAYSTQDGLKERFAELIPENVEKIKKLRKEKGNTVIGEVILDQAYGGMRGIKGLVWEGSVLDPEEGIRFRGLTIPDLQKQLPHAPGGKEPLPEGLFWLLLTGEIPTDAQVKGLSADWASRAEIPKHVEELIDRCPPTLHPMAQLGIAVNALESESQFTKAYEKGVNKKEYWQYTYEDSMNLIAKLPVIASRIYRNLFKDGKIVGSIDNSLDYSANFASLLGFGDNKEFIELLRLYLTIHADHEGGNVSAHTTKLVGSALSSPFLSLSAGLNGLAGPLHGRANQEVLEWILEMKSKIGSDVTKEDIEKYLWDTLKAGRVVPGYGHAVLRKTDPRYTAQREFALEHMPDYDLFHLVSTIYEVAPKVLTEHGKTKNPWPNVDSHSGVLLQYYGLTEQSYYTVLFGVSRAIGVLPQLIMDRAYGAPIERPKSFSTEKYAELVGLKL.

Positions 72 and 190 each coordinate CoA. Histidine 265 serves as a coordination point for oxaloacetate. A CoA-binding site is contributed by leucine 300. Residue histidine 301 is part of the active site. CoA is bound by residues valine 342, glycine 344, and tyrosine 345. Residues histidine 347 and arginine 356 each coordinate oxaloacetate. Residue histidine 347 is part of the active site. CoA-binding residues include threonine 394, lysine 395, and asparagine 400. Residue aspartate 402 is part of the active site. Oxaloacetate is bound by residues arginine 428 and arginine 448.

The protein belongs to the citrate synthase family. In terms of assembly, homodimer.

The protein resides in the mitochondrion matrix. The catalysed reaction is propanoyl-CoA + oxaloacetate + H2O = (2S,3S)-2-methylcitrate + CoA + H(+). The enzyme catalyses oxaloacetate + acetyl-CoA + H2O = citrate + CoA + H(+). It functions in the pathway organic acid metabolism; propanoate degradation. Activity is inhibited by p-chloromercuribenzoate (pCMB), monoiodoacetamide, H(2)O(2), ATP, ADP, NADH, NADPH, Hg(2+) and Zn(2+). Its function is as follows. Component of the methylcitrate cycle that catalyzes the synthesis of (2S,3S)-2-methylcitrate from propionyl-CoA and oxaloacetate. Plays an important role in detoxification of propionyl-CoA, an inhibitor of both primary and secondary metabolism. Also has citrate synthase activity using as substrates acetyl-CoA and oxaloacetate. The chain is 2-methylcitrate synthase, mitochondrial from Yarrowia lipolytica (strain CLIB 122 / E 150) (Yeast).